The chain runs to 221 residues: Membrane protein 0 (221 aa).

The disordered stretch occupies residues 1-22; it reads MATVHYSRRPGTPPVTLTSSPG. The short motif at 44–47 is the PPXY motif element; that stretch reads PPPY. A helical transmembrane segment spans residues 100-120; the sequence is FLILFGILTLTAVVVAIVAVF.

Belongs to the varicellovirus ORF0 protein family. Interacts with host ITCH; this interaction probably mediates ITCH degradation.

It localises to the host Golgi apparatus membrane. The polypeptide is Membrane protein 0 (Homo sapiens (Human)).